The primary structure comprises 88 residues: Putative membrane protein insertion efficiency factor (88 aa).

Belongs to the UPF0161 family.

It localises to the cell inner membrane. Its function is as follows. Could be involved in insertion of integral membrane proteins into the membrane. The polypeptide is Putative membrane protein insertion efficiency factor (Prochlorococcus marinus (strain MIT 9313)).